The sequence spans 130 residues: MATTKYYGTGRRKSSVARVYLVPGTGKITINKRDIDEYLGLETLKVVVRQPLVATETVDKFDVLVNVRGGGYTGQAGAIRHGIARALLQVDSEYRPVLKSAGFLTRDPRMKERKKYGLKAARRAPQFSKR.

It belongs to the universal ribosomal protein uS9 family.

This is Small ribosomal subunit protein uS9 from Agathobacter rectalis (strain ATCC 33656 / DSM 3377 / JCM 17463 / KCTC 5835 / VPI 0990) (Eubacterium rectale).